We begin with the raw amino-acid sequence, 346 residues long: Methylthioribose-1-phosphate isomerase (346 aa).

Substrate contacts are provided by residues 54–56, arginine 91, and glutamine 192; that span reads RGA. Residue aspartate 233 is the Proton donor of the active site. 243 to 244 contacts substrate; it reads NK.

It belongs to the eIF-2B alpha/beta/delta subunits family. MtnA subfamily.

It catalyses the reaction 5-(methylsulfanyl)-alpha-D-ribose 1-phosphate = 5-(methylsulfanyl)-D-ribulose 1-phosphate. It functions in the pathway amino-acid biosynthesis; L-methionine biosynthesis via salvage pathway; L-methionine from S-methyl-5-thio-alpha-D-ribose 1-phosphate: step 1/6. Its function is as follows. Catalyzes the interconversion of methylthioribose-1-phosphate (MTR-1-P) into methylthioribulose-1-phosphate (MTRu-1-P). This is Methylthioribose-1-phosphate isomerase from Yersinia enterocolitica serotype O:8 / biotype 1B (strain NCTC 13174 / 8081).